The chain runs to 99 residues: Small ribosomal subunit protein eS24 (99 aa).

It belongs to the eukaryotic ribosomal protein eS24 family.

This chain is Small ribosomal subunit protein eS24, found in Pyrococcus abyssi (strain GE5 / Orsay).